A 547-amino-acid chain; its full sequence is Alpha-1,3-mannosyl-glycoprotein 4-beta-N-acetylglucosaminyltransferase B (547 aa).

At 1-7 (MRLRNGT) the chain is on the cytoplasmic side. A helical; Signal-anchor for type II membrane protein transmembrane segment spans residues 8–28 (FLTVLLFGLCGLISLSWYTAF). The Lumenal segment spans residues 29–547 (SNSKGNVVDI…LSEIFIKKAE (519 aa)). Positions 36–83 (VDIYQREFLALRDRLHSAEQENLKRSKELNLVLDEIKRAIAEKQALRD) form a coiled coil. Residues asparagine 85, asparagine 101, and asparagine 464 are each glycosylated (N-linked (GlcNAc...) asparagine).

Belongs to the glycosyltransferase 54 family. A divalent metal cation is required as a cofactor. N-glycosylated.

Its subcellular location is the golgi apparatus membrane. It catalyses the reaction N(4)-{beta-D-GlcNAc-(1-&gt;2)-alpha-D-Man-(1-&gt;3)-[beta-D-GlcNAc-(1-&gt;2)-alpha-D-Man-(1-&gt;6)]-beta-D-Man-(1-&gt;4)-beta-D-GlcNAc-(1-&gt;4)-beta-D-GlcNAc}-L-asparaginyl-[protein] + UDP-N-acetyl-alpha-D-glucosamine = N(4)-{beta-D-GlcNAc-(1-&gt;2)-[beta-D-GlcNAc-(1-&gt;4)]-alpha-D-Man-(1-&gt;3)-[beta-D-GlcNAc-(1-&gt;2)-alpha-D-Man-(1-&gt;6)]-beta-D-Man-(1-&gt;4)-beta-D-GlcNAc-(1-&gt;4)-beta-D-GlcNAc}-L-asparaginyl-[protein] + UDP + H(+). It carries out the reaction an N(4)-{beta-D-GlcNAc-(1-&gt;2)-alpha-D-Man-(1-&gt;3)-[alpha-D-Man-(1-&gt;6)]-beta-D-Man-(1-&gt;4)-beta-D-GlcNAc-(1-&gt;4)-beta-D-GlcNAc}-L-asparaginyl-[protein] + UDP-N-acetyl-alpha-D-glucosamine = an N(4)-{beta-D-GlcNAc-(1-&gt;2)-[beta-D-GlcNAc-(1-&gt;4)]-alpha-D-Man-(1-&gt;3)-[alpha-D-Man-(1-&gt;6)]-beta-D-Man-(1-&gt;4)-beta-D-GlcNAc-(1-&gt;4)-beta-D-GlcNAc}-L-asparaginyl-[protein] + UDP + H(+). The catalysed reaction is an N(4)-{beta-D-GlcNAc-(1-&gt;2)-alpha-D-Man-(1-&gt;3)-[beta-D-GlcNAc-(1-&gt;2)-[beta-D-GlcNAc-(1-&gt;6)]-alpha-D-Man-(1-&gt;6)]-beta-D-Man-(1-&gt;4)-beta-D-GlcNAc-(1-&gt;4)-beta-D-GlcNAc}-L-asparaginyl-[protein] + UDP-N-acetyl-alpha-D-glucosamine = an N(4)-{beta-D-GlcNAc-(1-&gt;2)-[beta-D-GlcNAc-(1-&gt;4)]-alpha-D-Man-(1-&gt;3)-[beta-D-GlcNAc-(1-&gt;2)-[beta-D-GlcNAc-(1-&gt;6)]-alpha-D-Man-(1-&gt;6)]-beta-D-Man-(1-&gt;4)-beta-D-GlcNAc-(1-&gt;4)-beta-D-GlcNAc}-L-asparaginyl-[protein] + UDP + H(+). The enzyme catalyses an N(4)-{beta-D-GlcNAc-(1-&gt;2)-alpha-D-Man-(1-&gt;3)-[beta-D-GlcNAc-(1-&gt;2)-alpha-D-Man-(1-&gt;6)]-beta-D-Man-(1-&gt;4)-beta-D-GlcNAc-(1-&gt;4)-[alpha-L-Fuc-(1-&gt;6)]-beta-D-GlcNAc}-L-asparaginyl-[protein] + UDP-N-acetyl-alpha-D-glucosamine = N(4)-{beta-D-GlcNAc-(1-&gt;2)-[beta-D-GlcNAc-(1-&gt;4)]-alpha-D-Man-(1-&gt;3)-[beta-D-GlcNAc-(1-&gt;2)-alpha-D-Man-(1-&gt;6)]-beta-D-Man-(1-&gt;4)-beta-D-GlcNAc-(1-&gt;4)-[alpha-L-Fuc-(1-&gt;6)]-beta-D-GlcNAc}-asparaginyl-[protein] + UDP + H(+). It catalyses the reaction an N(4)-{beta-D-GlcNAc-(1-&gt;2)-alpha-D-Man-(1-&gt;3)-[beta-D-Gal-(1-&gt;4)-beta-D-GlcNAc-(1-&gt;2)-alpha-D-Man-(1-&gt;6)]-beta-D-Man-(1-&gt;4)-beta-D-GlcNAc-(1-&gt;4)-beta-D-GlcNAc}-L-asparaginyl-[protein] + UDP-N-acetyl-alpha-D-glucosamine = an N(4)-{beta-D-GlcNAc-(1-&gt;2)-[beta-D-GlcNAc-(1-&gt;4)]-alpha-D-Man-(1-&gt;3)-[beta-D-Gal-(1-&gt;4)-beta-D-GlcNAc-(1-&gt;2)-alpha-D-Man-(1-&gt;6)]-beta-D-Man-(1-&gt;4)-beta-D-GlcNAc-(1-&gt;4)-beta-D-GlcNAc}-L-asparaginyl-[protein] + UDP + H(+). It carries out the reaction N(4)-{beta-D-GlcNAc-(1-&gt;2)-alpha-D-Man-(1-&gt;3)-[alpha-D-Man-(1-&gt;3)-{alpha-D-Man-(1-&gt;6)}-alpha-D-Man-(1-&gt;6)]-beta-D-Man-(1-&gt;4)-beta-D-GlcNAc-(1-&gt;4)-beta-D-GlcNAc}-asparaginyl-[protein] + UDP-N-acetyl-alpha-D-glucosamine = N(4)-{beta-D-GlcNAc-(1-&gt;2)-[beta-D-GlcNAc-(1-&gt;4)]-alpha-D-Man-(1-&gt;3)-[alpha-D-Man-(1-&gt;3)-{alpha-D-Man-(1-&gt;6)}-alpha-D-Man-(1-&gt;6)]-beta-D-Man-(1-&gt;4)-beta-D-GlcNAc-(1-&gt;4)-beta-D-GlcNAc}-asparaginyl-[protein] + UDP + H(+). The catalysed reaction is N(4)-{beta-D-GlcNAc-(1-&gt;2)-alpha-D-Man-(1-&gt;3)-beta-D-Man-(1-&gt;4)-beta-D-GlcNAc-(1-&gt;4)-beta-D-GlcNAc}-asparaginyl-[protein] + UDP-N-acetyl-alpha-D-glucosamine = N(4)-{beta-D-GlcNAc-(1-&gt;2)-[beta-D-GlcNAc-(1-&gt;4)]-alpha-D-Man-(1-&gt;3)-beta-D-Man-(1-&gt;4)-beta-D-GlcNAc-(1-&gt;4)-beta-D-GlcNAc}-asparaginyl-[protein] + UDP + H(+). Its pathway is protein modification; protein glycosylation. In terms of biological role, glycosyltransferase that catalyze the transfer of GlcNAc from UDP-GlcNAc to the GlcNAcbeta1-2Manalpha1-3 arm of the core structure of N-linked glycans through a beta1-4 linkage and participates in the production of tri- and tetra-antennary N-linked sugar chains. Prefers complex-type N-glycans over hybrid-types. Has lower affinities for donors or acceptors than MGAT4A, suggesting that, under physiological conditions, it is not the main contributor in N-glycan biosynthesis. This chain is Alpha-1,3-mannosyl-glycoprotein 4-beta-N-acetylglucosaminyltransferase B (mgat4bQ9UQ53), found in Danio rerio (Zebrafish).